We begin with the raw amino-acid sequence, 158 residues long: NAD(P)H-quinone oxidoreductase subunit J, chloroplastic (158 aa).

It belongs to the complex I 30 kDa subunit family. As to quaternary structure, NDH is composed of at least 16 different subunits, 5 of which are encoded in the nucleus.

It is found in the plastid. The protein localises to the chloroplast thylakoid membrane. The catalysed reaction is a plastoquinone + NADH + (n+1) H(+)(in) = a plastoquinol + NAD(+) + n H(+)(out). The enzyme catalyses a plastoquinone + NADPH + (n+1) H(+)(in) = a plastoquinol + NADP(+) + n H(+)(out). Its function is as follows. NDH shuttles electrons from NAD(P)H:plastoquinone, via FMN and iron-sulfur (Fe-S) centers, to quinones in the photosynthetic chain and possibly in a chloroplast respiratory chain. The immediate electron acceptor for the enzyme in this species is believed to be plastoquinone. Couples the redox reaction to proton translocation, and thus conserves the redox energy in a proton gradient. The chain is NAD(P)H-quinone oxidoreductase subunit J, chloroplastic from Citrus sinensis (Sweet orange).